We begin with the raw amino-acid sequence, 252 residues long: Type III pantothenate kinase (252 aa).

6 to 13 is an ATP binding site; that stretch reads DIGNTSTA. 104–107 contributes to the substrate binding site; that stretch reads GADR. D106 acts as the Proton acceptor in catalysis. D128 provides a ligand contact to K(+). ATP is bound at residue T131. Substrate is bound at residue T183.

It belongs to the type III pantothenate kinase family. As to quaternary structure, homodimer. NH4(+) serves as cofactor. The cofactor is K(+).

Its subcellular location is the cytoplasm. The catalysed reaction is (R)-pantothenate + ATP = (R)-4'-phosphopantothenate + ADP + H(+). It functions in the pathway cofactor biosynthesis; coenzyme A biosynthesis; CoA from (R)-pantothenate: step 1/5. Its function is as follows. Catalyzes the phosphorylation of pantothenate (Pan), the first step in CoA biosynthesis. The protein is Type III pantothenate kinase of Thermus thermophilus (strain ATCC 27634 / DSM 579 / HB8).